Here is a 497-residue protein sequence, read N- to C-terminus: Glycerol kinase (497 aa).

T12 provides a ligand contact to ADP. 3 residues coordinate ATP: T12, T13, and S14. T12 is a binding site for sn-glycerol 3-phosphate. An ADP-binding site is contributed by R16. Sn-glycerol 3-phosphate contacts are provided by R82, E83, Y134, and D243. Residues R82, E83, Y134, D243, and Q244 each coordinate glycerol. Residues T265 and G308 each coordinate ADP. ATP is bound by residues T265, G308, Q312, and G411. ADP is bound at residue G411.

This sequence belongs to the FGGY kinase family.

It carries out the reaction glycerol + ATP = sn-glycerol 3-phosphate + ADP + H(+). It functions in the pathway polyol metabolism; glycerol degradation via glycerol kinase pathway; sn-glycerol 3-phosphate from glycerol: step 1/1. Its activity is regulated as follows. Inhibited by fructose 1,6-bisphosphate (FBP). Its function is as follows. Key enzyme in the regulation of glycerol uptake and metabolism. Catalyzes the phosphorylation of glycerol to yield sn-glycerol 3-phosphate. In Sinorhizobium fredii (strain NBRC 101917 / NGR234), this protein is Glycerol kinase.